The sequence spans 222 residues: C-8 sterol isomerase ERG2 (222 aa).

Residues 3–23 traverse the membrane as a helical segment; it reads FFPLLLLIGVVGYIMNVLFTT.

This sequence belongs to the ERG2 family.

The protein localises to the endoplasmic reticulum membrane. The enzyme catalyses fecosterol = episterol. It participates in steroid metabolism; ergosterol biosynthesis; ergosterol from zymosterol: step 2/5. With respect to regulation, catalytic activity is inhibited by the morphilines tridemorph, fenpropimorph, and fenpropidin. Its function is as follows. C-8 sterol isomerase; part of the third module of ergosterol biosynthesis pathway that includes the late steps of the pathway. ERG2 catalyzes the reaction which results in unsaturation at C-7 in the B ring of sterols and thus converts fecosterol to episterol. The third module or late pathway involves the ergosterol synthesis itself through consecutive reactions that mainly occur in the endoplasmic reticulum (ER) membrane. Firstly, the squalene synthase ERG9 catalyzes the condensation of 2 farnesyl pyrophosphate moieties to form squalene, which is the precursor of all steroids. Squalene synthase is crucial for balancing the incorporation of farnesyl diphosphate (FPP) into sterol and nonsterol isoprene synthesis. Secondly, the squalene epoxidase ERG1 catalyzes the stereospecific oxidation of squalene to (S)-2,3-epoxysqualene, which is considered to be a rate-limiting enzyme in steroid biosynthesis. Then, the lanosterol synthase ERG7 catalyzes the cyclization of (S)-2,3 oxidosqualene to lanosterol, a reaction that forms the sterol core. In the next steps, lanosterol is transformed to zymosterol through a complex process involving various demethylation, reduction and desaturation reactions. The lanosterol 14-alpha-demethylase ERG11 (also known as CYP51) catalyzes C14-demethylation of lanosterol to produce 4,4'-dimethyl cholesta-8,14,24-triene-3-beta-ol, which is critical for ergosterol biosynthesis. The C-14 reductase ERG24 reduces the C14=C15 double bond of 4,4-dimethyl-cholesta-8,14,24-trienol to produce 4,4-dimethyl-cholesta-8,24-dienol. 4,4-dimethyl-cholesta-8,24-dienol is substrate of the C-4 demethylation complex ERG25-ERG26-ERG27 in which ERG25 catalyzes the three-step monooxygenation required for the demethylation of 4,4-dimethyl and 4alpha-methylsterols, ERG26 catalyzes the oxidative decarboxylation that results in a reduction of the 3-beta-hydroxy group at the C-3 carbon to an oxo group, and ERG27 is responsible for the reduction of the keto group on the C-3. ERG28 has a role as a scaffold to help anchor ERG25, ERG26 and ERG27 to the endoplasmic reticulum and ERG29 regulates the activity of the iron-containing C4-methylsterol oxidase ERG25. Then, the sterol 24-C-methyltransferase ERG6 catalyzes the methyl transfer from S-adenosyl-methionine to the C-24 of zymosterol to form fecosterol. The C-8 sterol isomerase ERG2 catalyzes the reaction which results in unsaturation at C-7 in the B ring of sterols and thus converts fecosterol to episterol. The sterol-C5-desaturase ERG3 then catalyzes the introduction of a C-5 double bond in the B ring to produce 5-dehydroepisterol. The C-22 sterol desaturase ERG5 further converts 5-dehydroepisterol into ergosta-5,7,22,24(28)-tetraen-3beta-ol by forming the C-22(23) double bond in the sterol side chain. Finally, ergosta-5,7,22,24(28)-tetraen-3beta-ol is substrate of the C-24(28) sterol reductase ERG4 to produce ergosterol. The chain is C-8 sterol isomerase ERG2 from Saccharomyces cerevisiae (strain ATCC 204508 / S288c) (Baker's yeast).